Reading from the N-terminus, the 564-residue chain is Septation ring formation regulator EzrA (564 aa).

The Extracellular segment spans residues 1–4 (MVLF). The helical transmembrane segment at 5–23 (IILAILVVILIAIGVLFYM) threads the bilayer. At 24-564 (RSNKRNLIEK…KHIEEQVIKE (541 aa)) the chain is on the cytoplasmic side. Coiled-coil stretches lie at residues 84–126 (VEEK…HQVT), 165–223 (EAAE…LIRE), 271–303 (MISRLELDEANNKLENINDKLDEMYDLIEYEVK), and 350–435 (VRQF…RRLL).

This sequence belongs to the EzrA family.

The protein localises to the cell membrane. Its function is as follows. Negative regulator of FtsZ ring formation; modulates the frequency and position of FtsZ ring formation. Inhibits FtsZ ring formation at polar sites. Interacts either with FtsZ or with one of its binding partners to promote depolymerization. This chain is Septation ring formation regulator EzrA, found in Staphylococcus epidermidis (strain ATCC 12228 / FDA PCI 1200).